The chain runs to 36 residues: Kappa-theraphotoxin-Aa1a (36 aa).

Cystine bridges form between cysteine 3/cysteine 18, cysteine 10/cysteine 23, and cysteine 17/cysteine 30. Isoleucine 36 is subject to Isoleucine amide.

Belongs to the neurotoxin 10 (Hwtx-1) family. Expressed by the venom gland.

The protein resides in the secreted. Functionally, selective inhibitor of voltage-gated potassium channel Kv10.1/KCNH1/EAG1 (IC(50)=637 nM). It acts by shifting the voltage dependence of channel activation in a depolarising direction. It shows a 100% inhibition at saturating concentrations, shows fast on-rates and is reversible. It also slightly affects channel inactivation, when the membrane is highly depolarised (&gt;+80 mV). This Avicularia aurantiaca (Yellow-banded pinktoe tarantula) protein is Kappa-theraphotoxin-Aa1a.